A 574-amino-acid polypeptide reads, in one-letter code: E3 ubiquitin-protein ligase TRIM23 (574 aa).

The RING-type; degenerate zinc-finger motif lies at 31-76; sequence CGVCEDVFSLQGDKVPRLLLCGHTVCHDCLTRLPLHGRAIRCPFDR. The B box-type; degenerate zinc finger occupies 122–168; the sequence is ESIIRCDEDEAHVASVYCTVCATHLCSDCSQVTHSTKTLAKHRRVPL. Residues 352–379 adopt a coiled-coil conformation; the sequence is RVVLAKQEITRLLETLQKQQQQFTEVAD. The tract at residues 390–574 is ARF-like; it reads TFTKDNRVHI…LVAAGVLDVA (185 aa). Residues 411-418, 454-458, and 513-516 contribute to the GTP site; these read GLDGAGKT, DVGGK, and NKQD.

It in the C-terminal section; belongs to the small GTPase superfamily. Arf family. Homodimer. Interacts with PSCD1. Interacts with UBE2D2. Interacts with TBK1 (via N-terminal kinase domain) and p62/SQSTM1.

It is found in the cytoplasm. Its subcellular location is the endomembrane system. The protein localises to the golgi apparatus membrane. The protein resides in the lysosome membrane. The catalysed reaction is S-ubiquitinyl-[E2 ubiquitin-conjugating enzyme]-L-cysteine + [acceptor protein]-L-lysine = [E2 ubiquitin-conjugating enzyme]-L-cysteine + N(6)-ubiquitinyl-[acceptor protein]-L-lysine.. The protein operates within protein modification; protein ubiquitination. Acts as an E3 ubiquitin-protein ligase. Plays an essential role in autophagy activation during viral infection. Mechanistically, activates TANK-binding kinase 1/TBK1 by facilitating its dimerization and ability to phosphorylate the selective autophagy receptor SQSTM1. In order to achieve this function, TRIM23 mediates 'Lys-27'-linked auto-ubiquitination of its ADP-ribosylation factor (ARF) domain to induce its GTPase activity and its recruitment to autophagosomes. The polypeptide is E3 ubiquitin-protein ligase TRIM23 (Trim23) (Mus musculus (Mouse)).